Consider the following 683-residue polypeptide: Elongation factor G-like protein (683 aa).

The 263-residue stretch at 5–267 folds into the tr-type G domain; sequence QNVRSAALIG…YLGDIGVSPE (263 aa). GTP contacts are provided by residues 14 to 21, 73 to 77, and 127 to 130; these read GHNGSGKS, DTPGF, and NQMD.

The protein belongs to the TRAFAC class translation factor GTPase superfamily. Classic translation factor GTPase family. EF-G/EF-2 subfamily.

The polypeptide is Elongation factor G-like protein (Thermotoga maritima (strain ATCC 43589 / DSM 3109 / JCM 10099 / NBRC 100826 / MSB8)).